The chain runs to 471 residues: Vitellogenic carboxypeptidase (471 aa).

The first 19 residues, 1–19 (MVKFHLLVLIAFTCYTCSD), serve as a signal peptide directing secretion. N-linked (GlcNAc...) asparagine glycosylation occurs at Asn135. Residues Ser207, Asp391, and His448 contribute to the active site.

The protein belongs to the peptidase S10 family. In terms of tissue distribution, synthesized in the fat body of vitellogenic females, secreted into the hemolymph and accumulates in yolk bodies of developing oocytes.

It localises to the secreted. Functionally, may play a role in activating hydrolytic enzymes that are involved in the degradation of yolk proteins in developing embryos or may function as an exopeptidase in the degradation of vitellogenin. The protein is Vitellogenic carboxypeptidase (VCP) of Aedes aegypti (Yellowfever mosquito).